Reading from the N-terminus, the 491-residue chain is Cytosol aminopeptidase (491 aa).

Mn(2+) is bound by residues lysine 263 and aspartate 268. Lysine 275 is a catalytic residue. Aspartate 286, aspartate 345, and glutamate 347 together coordinate Mn(2+). Arginine 349 is a catalytic residue.

This sequence belongs to the peptidase M17 family. Mn(2+) serves as cofactor.

The protein localises to the cytoplasm. It carries out the reaction Release of an N-terminal amino acid, Xaa-|-Yaa-, in which Xaa is preferably Leu, but may be other amino acids including Pro although not Arg or Lys, and Yaa may be Pro. Amino acid amides and methyl esters are also readily hydrolyzed, but rates on arylamides are exceedingly low.. The catalysed reaction is Release of an N-terminal amino acid, preferentially leucine, but not glutamic or aspartic acids.. In terms of biological role, presumably involved in the processing and regular turnover of intracellular proteins. Catalyzes the removal of unsubstituted N-terminal amino acids from various peptides. This chain is Cytosol aminopeptidase (pepA), found in Haemophilus influenzae (strain ATCC 51907 / DSM 11121 / KW20 / Rd).